The chain runs to 115 residues: Selenoprotein K homolog (115 aa).

Residues 29–49 (FIWGILNQITFFFSTLIGGTV) form a helical membrane-spanning segment. Residues 48–115 (TVEPRRRPNN…NSASGSUGPK (68 aa)) form a disordered region. A compositionally biased stretch (gly residues) spans 58-84 (QGGGRRLAGFDGNGNVTGGSGVGGSGP). Positions 104–115 (ACNSASGSUGPK) are enriched in polar residues. Position 112 (Sec-112) is a non-standard amino acid, selenocysteine.

Belongs to the selenoprotein K family.

The protein localises to the membrane. This is Selenoprotein K homolog (selk) from Dictyostelium discoideum (Social amoeba).